Consider the following 273-residue polypeptide: Probable branched-chain-amino-acid aminotransferase (273 aa).

K133 carries the N6-(pyridoxal phosphate)lysine modification.

Belongs to the class-IV pyridoxal-phosphate-dependent aminotransferase family. Requires pyridoxal 5'-phosphate as cofactor.

The catalysed reaction is L-leucine + 2-oxoglutarate = 4-methyl-2-oxopentanoate + L-glutamate. It catalyses the reaction L-isoleucine + 2-oxoglutarate = (S)-3-methyl-2-oxopentanoate + L-glutamate. It carries out the reaction L-valine + 2-oxoglutarate = 3-methyl-2-oxobutanoate + L-glutamate. It participates in amino-acid biosynthesis; L-isoleucine biosynthesis; L-isoleucine from 2-oxobutanoate: step 4/4. The protein operates within amino-acid biosynthesis; L-leucine biosynthesis; L-leucine from 3-methyl-2-oxobutanoate: step 4/4. Its pathway is amino-acid biosynthesis; L-valine biosynthesis; L-valine from pyruvate: step 4/4. Its function is as follows. Acts on leucine, isoleucine and valine. The protein is Probable branched-chain-amino-acid aminotransferase (ilvE) of Thermotoga maritima (strain ATCC 43589 / DSM 3109 / JCM 10099 / NBRC 100826 / MSB8).